Reading from the N-terminus, the 101-residue chain is Urease subunit beta (101 aa).

The protein belongs to the urease beta subunit family. Heterotrimer of UreA (gamma), UreB (beta) and UreC (alpha) subunits. Three heterotrimers associate to form the active enzyme.

The protein resides in the cytoplasm. It catalyses the reaction urea + 2 H2O + H(+) = hydrogencarbonate + 2 NH4(+). It functions in the pathway nitrogen metabolism; urea degradation; CO(2) and NH(3) from urea (urease route): step 1/1. This is Urease subunit beta from Leptothrix cholodnii (strain ATCC 51168 / LMG 8142 / SP-6) (Leptothrix discophora (strain SP-6)).